A 187-amino-acid chain; its full sequence is Adenylate kinase (187 aa).

An ATP-binding site is contributed by 10–15 (GSGKGT). The tract at residues 30 to 59 (STGDMLRAEIAAGSELGKQAKAVMDAGNLV) is NMP. AMP-binding positions include Thr31, Arg36, 57 to 59 (NLV), 85 to 88 (GYPR), and Gln92. Residues 126-136 (GRAKEQGRADD) form an LID region. ATP is bound at residue Arg127. Arg133 and Arg144 together coordinate AMP. Gly172 is a binding site for ATP.

This sequence belongs to the adenylate kinase family. Monomer.

The protein localises to the cytoplasm. The catalysed reaction is AMP + ATP = 2 ADP. It functions in the pathway purine metabolism; AMP biosynthesis via salvage pathway; AMP from ADP: step 1/1. In terms of biological role, catalyzes the reversible transfer of the terminal phosphate group between ATP and AMP. Plays an important role in cellular energy homeostasis and in adenine nucleotide metabolism. The protein is Adenylate kinase of Stenotrophomonas maltophilia (strain R551-3).